Consider the following 288-residue polypeptide: Small ribosomal subunit protein uS15m (288 aa).

The N-terminal 50 residues, Met1 to Lys50, are a transit peptide targeting the mitochondrion.

It belongs to the universal ribosomal protein uS15 family. Component of the mitochondrial small ribosomal subunit (mt-SSU). Mature yeast 74S mitochondrial ribosomes consist of a small (37S) and a large (54S) subunit. The 37S small subunit contains a 15S ribosomal RNA (15S mt-rRNA) and at least 32 different proteins. The 54S large subunit contains a 21S rRNA (21S mt-rRNA) and at least 45 different proteins.

The protein localises to the mitochondrion. Functionally, component of the mitochondrial ribosome (mitoribosome), a dedicated translation machinery responsible for the synthesis of mitochondrial genome-encoded proteins, including at least some of the essential transmembrane subunits of the mitochondrial respiratory chain. The mitoribosomes are attached to the mitochondrial inner membrane and translation products are cotranslationally integrated into the membrane. The chain is Small ribosomal subunit protein uS15m (mrps28) from Schizosaccharomyces pombe (strain 972 / ATCC 24843) (Fission yeast).